The following is a 241-amino-acid chain: 3-deoxy-D-manno-octulosonic acid kinase (241 aa).

Residue Asp171 is part of the active site.

It belongs to the protein kinase superfamily. KdkA/RfaP family.

The protein resides in the cell inner membrane. It carries out the reaction an alpha-Kdo-(2-&gt;6)-lipid IVA + ATP = a 4-O-phospho-alpha-Kdo-(2-&gt;6)-lipid IVA + ADP + H(+). It participates in bacterial outer membrane biogenesis; LPS core biosynthesis. Catalyzes the ATP-dependent phosphorylation of the 3-deoxy-D-manno-octulosonic acid (Kdo) residue in Kdo-lipid IV(A) at the 4-OH position. The sequence is that of 3-deoxy-D-manno-octulosonic acid kinase from Haemophilus influenzae (strain PittEE).